Consider the following 339-residue polypeptide: Heat-inducible transcription repressor HrcA (339 aa).

This sequence belongs to the HrcA family.

Functionally, negative regulator of class I heat shock genes (grpE-dnaK-dnaJ and groELS operons). Prevents heat-shock induction of these operons. This Thermotoga neapolitana (strain ATCC 49049 / DSM 4359 / NBRC 107923 / NS-E) protein is Heat-inducible transcription repressor HrcA.